The sequence spans 216 residues: Probable nicotinate-nucleotide adenylyltransferase (216 aa).

This sequence belongs to the NadD family.

It carries out the reaction nicotinate beta-D-ribonucleotide + ATP + H(+) = deamido-NAD(+) + diphosphate. It participates in cofactor biosynthesis; NAD(+) biosynthesis; deamido-NAD(+) from nicotinate D-ribonucleotide: step 1/1. Functionally, catalyzes the reversible adenylation of nicotinate mononucleotide (NaMN) to nicotinic acid adenine dinucleotide (NaAD). This Geotalea daltonii (strain DSM 22248 / JCM 15807 / FRC-32) (Geobacter daltonii) protein is Probable nicotinate-nucleotide adenylyltransferase.